The sequence spans 692 residues: Ribonuclease J (692 aa).

The interval 1-91 is disordered; the sequence is MTDNNQNNEN…RNYAKEELDN (91 aa). Residues 9–25 show a composition bias toward basic and acidic residues; that stretch reads ENHENSSENSKDHHEAR. Over residues 57–79 the composition is skewed to basic residues; that stretch reads HHKKEHRPNKKPNNHHKPKHASQ. 2 positions are modified to N6-acetyllysine: K135 and K141. The Zn(2+) site is built by H209, H211, D213, H214, H278, and D300. 3 positions are modified to N6-acetyllysine: K324, K338, and K398. 501–505 is a binding site for substrate; that stretch reads HVSGH. N6-acetyllysine is present on K512. H527 is a binding site for Zn(2+). An N6-acetyllysine mark is found at K548, K635, and K650.

The protein belongs to the metallo-beta-lactamase superfamily. RNA-metabolizing metallo-beta-lactamase-like family. Bacterial RNase J subfamily. Homodimer. Homotetramer; dimer of homodimers. Interacts with RNA helicase RhpA, might be a member of a minimal RNA degradosome complex. Requires Zn(2+) as cofactor. Post-translationally, acetylated on nine lysine residues. Some of the residues are acetylated by multiple different mechanisms. RimL is partially responsible for the acetylation of Lys-324, Lys-398 and Lys-650. HPB8_1270 homolog is partially responsible for the acetylation of Lys-324, Lys-398, Lys-512 and Lys-650. Acetyl-phosphate-mediated non-enzymatic acetylation pathway takes part in the acetylation of Lys-135, Lys-324, Lys-398, Lys-512 and Lys-650. Acetylation of the remaining residues Lys-141, Lys-338, Lys-548 and Lys-635 occurs by a yet undetermined mechanism. Acetylation on a number of these residues is important for growth regulation and proper cell morphology.

The protein localises to the cytoplasm. With respect to regulation, catalytic activity is regulated by the balance between homodimers and homotetramers, with homotetramers being the active forms of this enzyme. Acetylation allosterically regulates the homooligomerization state and hence the catalytic activity. In terms of biological role, an RNase that has 5'-3' exoribonuclease and endoribonuclease activity. Degrades 5'-monophosphorylated ssRNA and dsRNA, considerably more active on ssRNA. Association with RhpA significantly increases the dsRNase activity. Degrades RNA substrate with hairpin structures at both ends with low activity, but presence of RhpA significantly increases the activity on this substrate. Stimulates ATPase activity of RNA helicase RhpA. Involved in stabilization of mRNA but apparently not rRNA. This Helicobacter pylori (strain J99 / ATCC 700824) (Campylobacter pylori J99) protein is Ribonuclease J.